The sequence spans 529 residues: Probable threonine/serine exporter (529 aa).

Transmembrane regions (helical) follow at residues 88-108 (ITVTTIIVSALATTDTPPVTI), 168-188 (FALGVAMLLGGTWLTCVLAAV), 212-232 (VFGAGIATLVAVAAYLIAGQD), 234-254 (TALVATGIVVLLSGMTLVGSM), 265-285 (ALARLGDALFLTAGIVVGILI), 312-332 (MPLPILVAVSGAALSGVCLTI), 344-364 (AGLSAGLAELVLIGLGAAGFG), 365-385 (RVVATWTAAIGVGFLATLISI), 389-409 (APALVTATAGIMPMLPGLAVF), and 428-448 (LLEAAATALALGSGVVLGEFL). The tract at residues 482–501 (QPAKSQQPTGTGGQRWRSVA) is disordered.

Belongs to the ThrE exporter (TC 2.A.79) family.

It is found in the cell membrane. The enzyme catalyses L-threonine(in) + H(+)(out) = L-threonine(out) + H(+)(in). Catalyzes the export of L-threonine and L-serine from the cell to the extracellular environment. Export is dependent on the proton motive force. Required for in vitro growth and survival of bacteria inside macrophages. Increased expression is associated with low-level amikacin (AMK) resistance. The protein is Probable threonine/serine exporter of Mycobacterium tuberculosis (strain ATCC 25618 / H37Rv).